Here is a 354-residue protein sequence, read N- to C-terminus: Serine/threonine-protein phosphatase 2A activator 2 (354 aa).

Belongs to the PTPA-type PPIase family.

The protein resides in the cytoplasm. It carries out the reaction [protein]-peptidylproline (omega=180) = [protein]-peptidylproline (omega=0). Its function is as follows. PPIases accelerate the folding of proteins. It catalyzes the cis-trans isomerization of proline imidic peptide bonds in oligopeptides. Acts as a regulatory subunit for PP2A-like phosphatases modulating their activity or substrate specificity, probably by inducing a conformational change in the catalytic subunit, a direct target of the PPIase. Can reactivate inactive phosphatase PP2A-phosphatase methylesterase complexes (PP2Ai) in presence of ATP and Mg(2+) by dissociating the inactive form from the complex. This chain is Serine/threonine-protein phosphatase 2A activator 2 (RRD2), found in Yarrowia lipolytica (strain CLIB 122 / E 150) (Yeast).